A 476-amino-acid polypeptide reads, in one-letter code: MITSALHRAADWAKSVFSSAALGDPRRTARLVNVAAQLAKYSGKSITISSEGSEAMQEGAYRFIRNPNVSAEAIRKAGAMQTVKLAQEFPELLAIEDTTSLSYRHQVAEELGKLGSIQDKSRGWWVHSVLLLEATTFRTVGLLHQEWWMRPDDPADADEKESGKWLAAAATSRLRMGSMMSNVIAVCDREADIHAYLQDKLAHNERFVVRSKHPRKDVESGLYLYDHLKNQPELGGYQISIPQKGVVDKRGKRKNRPARKASLSLRSGRITLKQGNITLNAVLAEEINPPKGETPLKWLLLTSEPVESLAQALRVIDIYTHRWRIEEFHKAWKTGAGAERQRMEEPDNLERMVSILSFVAVRLLQLRESFTLPQALRAQGLLKEAEHVESQSAETVLTPDECQLLGYLDKGKRKRKEKAGSLQWAYMAIARLGGFMDSKRTGIASWGALWEGWEALQSKLDGFLAAKDLMAQGIKI.

The tract at residues 1–70 (MITSALHRAA…YRFIRNPNVS (70 aa)) is interaction with DNA. Mg(2+) contacts are provided by D97 and D188. 2 interaction with DNA regions span residues 237-255 (YQISIPQKGVVDKRGKRKN) and 319-348 (YTHRWRIEEFHKAWKTGAGAERQRMEEPDN). E326 lines the Mg(2+) pocket. The important for dimerization stretch occupies residues 369–476 (SFTLPQALRA…KDLMAQGIKI (108 aa)).

It belongs to the transposase 11 family. Monomer. Homodimer of tnp (isoform 1), and heterodimer of tnp (isoform 1) and inh (isoform 2). The cofactor is Mg(2+).

Functionally, mediates transposition of transposon Tn5 by a 'cut and paste' mechanism. First, the monomeric transposase binds the 19 bp inverted DNA repeats flanking the transposon. Then, dimerization of the DNA-bound transposase creates a synaptic DNA complex. After nicking of the first DNA strand, excision of the transposon proceeds through a series of intermediates. The transposase then mediates the insertion of the transposon at a new site by strand transfer. The activity of the wild-type transposase is very low, and is further inhibited by dimerization with the transposase inhibitor (inh). The polypeptide is Transposase for transposon Tn5 (tnpA) (Escherichia coli).